The primary structure comprises 119 residues: NADH-quinone oxidoreductase subunit A (119 aa).

A run of 3 helical transmembrane segments spans residues 7 to 27, 63 to 83, and 88 to 108; these read YPVL…VSIG, LVAI…PWGV, and IGWP…LGFA.

This sequence belongs to the complex I subunit 3 family. In terms of assembly, NDH-1 is composed of 14 different subunits. Subunits NuoA, H, J, K, L, M, N constitute the membrane sector of the complex.

Its subcellular location is the cell inner membrane. The enzyme catalyses a quinone + NADH + 5 H(+)(in) = a quinol + NAD(+) + 4 H(+)(out). In terms of biological role, NDH-1 shuttles electrons from NADH, via FMN and iron-sulfur (Fe-S) centers, to quinones in the respiratory chain. The immediate electron acceptor for the enzyme in this species is believed to be ubiquinone. Couples the redox reaction to proton translocation (for every two electrons transferred, four hydrogen ions are translocated across the cytoplasmic membrane), and thus conserves the redox energy in a proton gradient. The protein is NADH-quinone oxidoreductase subunit A of Burkholderia ambifaria (strain MC40-6).